We begin with the raw amino-acid sequence, 122 residues long: Crustacean hyperglycemic hormones 7 (122 aa).

Positions 1-26 (MSLAMTAFRMMAVALVVVVASSTTWA) are cleaved as a signal peptide. Disulfide bonds link Cys55–Cys91, Cys71–Cys87, and Cys74–Cys100. Valine amide is present on Val120.

This sequence belongs to the arthropod CHH/MIH/GIH/VIH hormone family. Produced by the medulla terminalis X-organ in the eyestalks and transported to the sinus gland where they are stored and released.

It is found in the secreted. In terms of biological role, hormone found in the sinus gland of isopods and decapods which controls the blood sugar level. Has a secretagogue action over the amylase released from the midgut gland. May act as a stress hormone and may be involved in the control of molting and reproduction. The protein is Crustacean hyperglycemic hormones 7 of Penaeus japonicus (Kuruma prawn).